The primary structure comprises 342 residues: MKILEFNDKRGSLKLHVENEDDLWLLHIIIKKGDRIVAKTTRDISMGKDSRRIPMTIELQVEYTEFQNFTTRLRIHGLILDAPERFGIKGAHHTVNLDIGDEVIIIKEQWSNYELEKIREQEEKKGKLLIALVDVDEYIIALLMKQGVKILAEKSLQTPGKDNDVVNENIEEMANEIISFVKLTGVNVIIIAGPGPFKDMVNQKIKQIDNKLIVYVDSVSSASRAGLNELLRRDIIDQVYREFEIAQQLKILESIMENLAKNTGLVVYGIEDIKKANELGAVDKLLITEDYLTDTGREIIDELLRDIEKKKGKIMIVPKDSPIYYQVKNLTGIVSLLRFRIN.

Belongs to the eukaryotic release factor 1 family. Pelota subfamily. Monomer. It depends on a divalent metal cation as a cofactor.

Its subcellular location is the cytoplasm. May function in recognizing stalled ribosomes, interact with stem-loop structures in stalled mRNA molecules, and effect endonucleolytic cleavage of the mRNA. May play a role in the release non-functional ribosomes and degradation of damaged mRNAs. Has endoribonuclease activity. The sequence is that of Protein pelota homolog from Sulfolobus acidocaldarius (strain ATCC 33909 / DSM 639 / JCM 8929 / NBRC 15157 / NCIMB 11770).